A 595-amino-acid polypeptide reads, in one-letter code: Beta-(1--&gt;2)glucan export ATP-binding/permease protein NdvA (595 aa).

The 281-residue stretch at 21 to 301 (SLLICSANVM…MSNFINLTIS (281 aa)) folds into the ABC transmembrane type-1 domain. Helical transmembrane passes span 22–42 (LLICSANVMLAIITIAEPILF), 55–75 (IIPTLTIWVCFGISHILAYVL), 129–149 (IWLDFMRQHLSTLVALFVLIP), 152–172 (FNMNWRLSIVLVVLAIIYVLI), and 248–268 (MASTISIVCVLLLGAFFVAKG). Positions 335–569 (IQFHHVTYKF…GGRFYKLLKA (235 aa)) constitute an ABC transporter domain. ATP is bound at residue 368–375 (GPTGAGKT).

This sequence belongs to the ABC transporter superfamily. Beta-(1--&gt;2)glucan exporter (TC 3.A.1.108.1) family. As to quaternary structure, homodimer.

It localises to the cell inner membrane. The catalysed reaction is [(1-&gt;2)-beta-D-glucosyl](n)(in) + ATP + H2O = [(1-&gt;2)-beta-D-glucosyl](n)(out) + ADP + phosphate + H(+). Involved in beta-(1--&gt;2)glucan export. Transmembrane domains (TMD) form a pore in the inner membrane and the ATP-binding domain (NBD) is responsible for energy generation. The sequence is that of Beta-(1--&gt;2)glucan export ATP-binding/permease protein NdvA from Bartonella henselae (strain ATCC 49882 / DSM 28221 / CCUG 30454 / Houston 1) (Rochalimaea henselae).